The primary structure comprises 393 residues: tRNA(Met) cytidine acetate ligase (393 aa).

The ATP site is built by Gly81, Asn142, and Arg167.

This sequence belongs to the TmcAL family.

The protein localises to the cytoplasm. It catalyses the reaction cytidine(34) in elongator tRNA(Met) + acetate + ATP = N(4)-acetylcytidine(34) in elongator tRNA(Met) + AMP + diphosphate. Catalyzes the formation of N(4)-acetylcytidine (ac(4)C) at the wobble position of elongator tRNA(Met), using acetate and ATP as substrates. First activates an acetate ion to form acetyladenylate (Ac-AMP) and then transfers the acetyl group to tRNA to form ac(4)C34. This chain is tRNA(Met) cytidine acetate ligase, found in Bacillus thuringiensis (strain Al Hakam).